The following is a 211-amino-acid chain: FMN-dependent NADH:quinone oxidoreductase 3 (211 aa).

Position 102 to 105 (102 to 105 (MWNF)) interacts with FMN.

This sequence belongs to the azoreductase type 1 family. In terms of assembly, homodimer. FMN serves as cofactor.

It catalyses the reaction 2 a quinone + NADH + H(+) = 2 a 1,4-benzosemiquinone + NAD(+). The enzyme catalyses N,N-dimethyl-1,4-phenylenediamine + anthranilate + 2 NAD(+) = 2-(4-dimethylaminophenyl)diazenylbenzoate + 2 NADH + 2 H(+). Quinone reductase that provides resistance to thiol-specific stress caused by electrophilic quinones. Its function is as follows. Also exhibits azoreductase activity. Catalyzes the reductive cleavage of the azo bond in aromatic azo compounds to the corresponding amines. This is FMN-dependent NADH:quinone oxidoreductase 3 from Bacillus cereus (strain ATCC 10987 / NRS 248).